A 546-amino-acid polypeptide reads, in one-letter code: Probable protein kinase UbiB (546 aa).

Residues 123–501 (DFDETPLASA…SRRQGQARYL (379 aa)) enclose the Protein kinase domain. ATP contacts are provided by residues 129–137 (LASASIAQV) and lysine 152. Residue aspartate 287 is the Proton acceptor of the active site. A run of 2 helical transmembrane segments spans residues 496–516 (GQAR…VFLL) and 521–541 (HIEW…LGWF).

It belongs to the ABC1 family. UbiB subfamily.

It localises to the cell inner membrane. It participates in cofactor biosynthesis; ubiquinone biosynthesis [regulation]. Is probably a protein kinase regulator of UbiI activity which is involved in aerobic coenzyme Q (ubiquinone) biosynthesis. The chain is Probable protein kinase UbiB from Aeromonas salmonicida (strain A449).